The chain runs to 967 residues: Phosphoenolpyruvate carboxylase (967 aa).

Ser-11 is subject to Phosphoserine. Residues His-172 and Lys-601 contribute to the active site.

The protein belongs to the PEPCase type 1 family. Homotetramer. The cofactor is Mg(2+).

It is found in the cytoplasm. It catalyses the reaction oxaloacetate + phosphate = phosphoenolpyruvate + hydrogencarbonate. The protein operates within photosynthesis; C3 acid pathway. With respect to regulation, by light-reversible phosphorylation. In terms of biological role, through the carboxylation of phosphoenolpyruvate (PEP) it forms oxaloacetate, a four-carbon dicarboxylic acid source for the tricarboxylic acid cycle. This chain is Phosphoenolpyruvate carboxylase (PPCA1), found in Flaveria pringlei.